The primary structure comprises 295 residues: Fructose-bisphosphate aldolase class 1 (295 aa).

E176 acts as the Proton acceptor in catalysis. K213 (schiff-base intermediate with dihydroxyacetone-P) is an active-site residue.

This sequence belongs to the class I fructose-bisphosphate aldolase family.

It catalyses the reaction beta-D-fructose 1,6-bisphosphate = D-glyceraldehyde 3-phosphate + dihydroxyacetone phosphate. The protein operates within carbohydrate degradation; glycolysis; D-glyceraldehyde 3-phosphate and glycerone phosphate from D-glucose: step 4/4. In Clostridium beijerinckii (strain ATCC 51743 / NCIMB 8052) (Clostridium acetobutylicum), this protein is Fructose-bisphosphate aldolase class 1.